Here is a 750-residue protein sequence, read N- to C-terminus: Neprilysin (750 aa).

G2 is lipidated: N-myristoyl glycine. The Cytoplasmic portion of the chain corresponds to 2–28; the sequence is GRSESQMDITDINAPKPKKKQRWTPLE. Phosphoserine occurs at positions 4 and 6. The Stop-transfer sequence signature appears at 16 to 23; the sequence is PKPKKKQR. Residues 29–51 traverse the membrane as a helical; Signal-anchor for type II membrane protein segment; it reads ISLSVLVLLLTIIAVTMIALYAT. The Extracellular portion of the chain corresponds to 52–750; sequence YDDGICKSSD…MNPERKCRVW (699 aa). A Peptidase M13 domain is found at 56–750; that stretch reads ICKSSDCIKS…MNPERKCRVW (695 aa). Disulfide bonds link C57–C62, C80–C735, C88–C695, C143–C411, C234–C242, and C621–C747. R103 contacts a peptide. Residues N145 and N211 are each glycosylated (N-linked (GlcNAc...) asparagine). N-linked (GlcNAc...) asparagine glycosylation is found at N285, N311, and N325. Residue H584 participates in Zn(2+) binding. E585 is a catalytic residue. H588 serves as a coordination point for Zn(2+). The N-linked (GlcNAc...) asparagine glycan is linked to N628. E647 is a binding site for Zn(2+). D651 acts as the Proton donor in catalysis.

The protein belongs to the peptidase M13 family. Zn(2+) is required as a cofactor. Myristoylation is a determinant of membrane targeting. Post-translationally, glycosylation at Asn-628 is necessary both for surface expression and neutral endopeptidase activity.

The protein resides in the cell membrane. The enzyme catalyses Preferential cleavage of polypeptides between hydrophobic residues, particularly with Phe or Tyr at P1'.. The catalysed reaction is substance P + H2O = substance P(1-9) + L-Leu-L-Met-NH2. It carries out the reaction substance P + H2O = substance P(1-7) + L-Phe-Gly-L-Leu-L-Met-NH2. It catalyses the reaction neurotensin + H2O = neurotensin(1-11) + L-isoleucyl-L-leucine. The enzyme catalyses neurotensin + H2O = neurotensin(1-10) + L-tyrosyl-L-isoleucyl-L-leucine. Its function is as follows. Thermolysin-like specificity, but is almost confined on acting on polypeptides of up to 30 amino acids. Biologically important in the destruction of opioid peptides such as Met- and Leu-enkephalins by cleavage of a Gly-Phe bond. Catalyzes cleavage of bradykinin, substance P and neurotensin peptides. Able to cleave angiotensin-1, angiotensin-2 and angiotensin 1-9. Involved in the degradation of the atrial natriuretic factor (ANF). Displays UV-inducible elastase activity toward skin preelastic and elastic fibers. This chain is Neprilysin, found in Mus musculus (Mouse).